A 423-amino-acid polypeptide reads, in one-letter code: D-tagatose-1,6-bisphosphate aldolase subunit GatZ (423 aa).

Belongs to the GatZ/KbaZ family. GatZ subfamily. As to quaternary structure, forms a complex with GatY.

The protein operates within carbohydrate metabolism; D-tagatose 6-phosphate degradation; D-glyceraldehyde 3-phosphate and glycerone phosphate from D-tagatose 6-phosphate: step 2/2. In terms of biological role, component of the tagatose-1,6-bisphosphate aldolase GatYZ that is required for full activity and stability of the Y subunit. Could have a chaperone-like function for the proper and stable folding of GatY. When expressed alone, GatZ does not show any aldolase activity. Is involved in the catabolism of galactitol. The protein is D-tagatose-1,6-bisphosphate aldolase subunit GatZ of Salmonella newport (strain SL254).